We begin with the raw amino-acid sequence, 268 residues long: Tryptophan synthase alpha chain (268 aa).

Residues Glu49 and Asp60 each act as proton acceptor in the active site.

The protein belongs to the TrpA family. Tetramer of two alpha and two beta chains.

The catalysed reaction is (1S,2R)-1-C-(indol-3-yl)glycerol 3-phosphate + L-serine = D-glyceraldehyde 3-phosphate + L-tryptophan + H2O. Its pathway is amino-acid biosynthesis; L-tryptophan biosynthesis; L-tryptophan from chorismate: step 5/5. Its function is as follows. The alpha subunit is responsible for the aldol cleavage of indoleglycerol phosphate to indole and glyceraldehyde 3-phosphate. In Vibrio parahaemolyticus serotype O3:K6 (strain RIMD 2210633), this protein is Tryptophan synthase alpha chain.